The sequence spans 334 residues: Beta-ketoacyl-[acyl-carrier-protein] synthase III (334 aa).

Residues C114 and H253 contribute to the active site. Positions 254-258 are ACP-binding; the sequence is QANIR. Residue N283 is part of the active site.

The protein belongs to the thiolase-like superfamily. FabH family. Homodimer.

The protein localises to the cytoplasm. It carries out the reaction malonyl-[ACP] + acetyl-CoA + H(+) = 3-oxobutanoyl-[ACP] + CO2 + CoA. It participates in lipid metabolism; fatty acid biosynthesis. In terms of biological role, catalyzes the condensation reaction of fatty acid synthesis by the addition to an acyl acceptor of two carbons from malonyl-ACP. Catalyzes the first condensation reaction which initiates fatty acid synthesis and may therefore play a role in governing the total rate of fatty acid production. Possesses both acetoacetyl-ACP synthase and acetyl transacylase activities. Its substrate specificity determines the biosynthesis of branched-chain and/or straight-chain of fatty acids. In Campylobacter concisus (strain 13826), this protein is Beta-ketoacyl-[acyl-carrier-protein] synthase III.